A 228-amino-acid polypeptide reads, in one-letter code: Probable transcriptional regulatory protein SilR (228 aa).

The region spanning lysine 2–leucine 116 is the Response regulatory domain. Aspartate 51 carries the 4-aspartylphosphate modification. The ompR/PhoB-type DNA-binding region spans glutamate 125–isoleucine 225.

In terms of processing, phosphorylated by SilS.

Its subcellular location is the cytoplasm. In terms of biological role, component of the sil cation-efflux system that confers resistance to silver. Probable member of a two-component regulatory system SilS/SilR. In Salmonella typhimurium, this protein is Probable transcriptional regulatory protein SilR (silR).